Consider the following 117-residue polypeptide: Large ribosomal subunit protein bL20 (117 aa).

It belongs to the bacterial ribosomal protein bL20 family.

Functionally, binds directly to 23S ribosomal RNA and is necessary for the in vitro assembly process of the 50S ribosomal subunit. It is not involved in the protein synthesizing functions of that subunit. This is Large ribosomal subunit protein bL20 from Finegoldia magna (strain ATCC 29328 / DSM 20472 / WAL 2508) (Peptostreptococcus magnus).